Consider the following 355-residue polypeptide: WAT1-related protein At1g25270 (355 aa).

10 helical membrane-spanning segments follow: residues 4–24, 33–53, 65–85, 94–114, 134–154, 175–195, 207–227, 244–264, 272–292, and 297–317; these read VVAM…FKIT, VLVA…ALIF, LLLL…ILYL, TFSA…GLVF, LLGA…IHIW, VSIL…LWLL, LYWN…IIAL, LLAT…LVAW, LFVT…GSFA, and LHLG…LVVW. In terms of domain architecture, EamA 1 spans 12–142; that stretch reads FIFAGMFILF…TLLGACGALV (131 aa). The region spanning 210–316 is the EamA 2 domain; sequence NTSLMNGVGS…IMVGGVYLVV (107 aa).

The protein belongs to the drug/metabolite transporter (DMT) superfamily. Plant drug/metabolite exporter (P-DME) (TC 2.A.7.4) family.

The protein resides in the membrane. The protein is WAT1-related protein At1g25270 of Arabidopsis thaliana (Mouse-ear cress).